A 495-amino-acid chain; its full sequence is MLLIISFTIVSFFFIIIFSLFHLLFLQKLRYCNCEICHAYLTSSWKKDFINLSDWYTHLLRRSPTSTIKVHVLNSVITANPSNVEHILKTNFHNYPKGKQFSVILGDLLGRGIFNSDGDTWRFQRKLASLELGSVSVRVFAHEIVKTEIETRLLPILTSFSDNPGSVLDLQDVFRRFSFDTISKLSFGFDPDCLRLPFPISEFAVAFDTASLLSAKRALAPFPLLWKTKRLLRIGSEKKLQESINVINRLAGDLIKQRRLTGLMGKNDLISRFMAVVAEDDDEYLRDIVVSFLLAGRDTVAAGLTGFFWLLTRHPEVENRIREELDRVMGTGFDSVTARCDEMREMDYLHASLYESMRLFPPVQFDSKFALNDDVLSDGTFVNSGTRVTYHAYAMGRMDRIWGPDYEEFKPERWLDNEGKFRPENPVKYPVFQAGARVCIGKEMAIMEMKSIAVAIIRRFETRVASPETTETLRFAPGLTATVNGGLPVMIQERS.

A helical transmembrane segment spans residues 2–22; the sequence is LLIISFTIVSFFFIIIFSLFH. Cys-439 provides a ligand contact to heme.

Belongs to the cytochrome P450 family. Heme is required as a cofactor.

The protein localises to the membrane. The protein resides in the endoplasmic reticulum membrane. It carries out the reaction a 12-hydroxyjasmonyl-L-alpha-amino acid + 2 reduced [NADPH--hemoprotein reductase] + 2 O2 = a 12-hydroxy-12-oxojasmonyl-L-alpha-amino acid + 2 oxidized [NADPH--hemoprotein reductase] + 3 H2O + 3 H(+). Functionally, involved in the oxidation of the plant hormone jasmonoyl-L-isoleucine (JA-Ile), a bioactive phytohormone of the jasmonate-mediated signaling pathway. Converts 12-hydroxy-JA-Ile (12OH-JA-Ile) to the carboxy-derivative 12COOH-JA-Ile. Exerts negative feedback control on JA-Ile levels and plays a role in attenuation of jasmonate responses. Also functions as in-chain fatty acids hydroxylase in vitro. Catalyzes the hydroxylation of 12-hydroxy-jasmonoyl-L-phenylalanine (12OH-JA-Phe) in vitro. Converts 12OH-JA-Phe to the carboxy-derivative 12COOH-JA-Phe. This Arabidopsis thaliana (Mouse-ear cress) protein is Cytochrome P450 94C1.